The following is a 185-amino-acid chain: Ribose 1,5-bisphosphate phosphokinase PhnN (185 aa).

The protein belongs to the ribose 1,5-bisphosphokinase family.

It carries out the reaction alpha-D-ribose 1,5-bisphosphate + ATP = 5-phospho-alpha-D-ribose 1-diphosphate + ADP. The protein operates within metabolic intermediate biosynthesis; 5-phospho-alpha-D-ribose 1-diphosphate biosynthesis; 5-phospho-alpha-D-ribose 1-diphosphate from D-ribose 5-phosphate (route II): step 3/3. Catalyzes the phosphorylation of ribose 1,5-bisphosphate to 5-phospho-D-ribosyl alpha-1-diphosphate (PRPP). This Escherichia coli (strain SMS-3-5 / SECEC) protein is Ribose 1,5-bisphosphate phosphokinase PhnN.